The primary structure comprises 326 residues: Phospho-N-acetylmuramoyl-pentapeptide-transferase (326 aa).

9 helical membrane-spanning segments follow: residues 3–23 (ISIS…PAFI), 51–71 (TMGG…VALF), 79–99 (VGMI…DDFL), 115–135 (LALQ…GGDM), 138–158 (IFGY…FWLV), 169–189 (GIDG…GVIA), 195–215 (MDIL…FVFN), 221–243 (VFMG…MALH), and 304–324 (VDFF…AILY).

This sequence belongs to the glycosyltransferase 4 family. MraY subfamily. Requires Mg(2+) as cofactor.

The protein resides in the cell membrane. The enzyme catalyses UDP-N-acetyl-alpha-D-muramoyl-L-alanyl-gamma-D-glutamyl-L-lysyl-D-alanyl-D-alanine + di-trans,octa-cis-undecaprenyl phosphate = Mur2Ac(oyl-L-Ala-gamma-D-Glu-L-Lys-D-Ala-D-Ala)-di-trans,octa-cis-undecaprenyl diphosphate + UMP. It participates in cell wall biogenesis; peptidoglycan biosynthesis. Catalyzes the initial step of the lipid cycle reactions in the biosynthesis of the cell wall peptidoglycan: transfers peptidoglycan precursor phospho-MurNAc-pentapeptide from UDP-MurNAc-pentapeptide onto the lipid carrier undecaprenyl phosphate, yielding undecaprenyl-pyrophosphoryl-MurNAc-pentapeptide, known as lipid I. This Streptococcus pneumoniae (strain Hungary19A-6) protein is Phospho-N-acetylmuramoyl-pentapeptide-transferase.